Reading from the N-terminus, the 949-residue chain is MAQVAVSTLPVEEESSSETRMVVTFLVSALESMCKELAKSKAEVACIAVYETDVFVVGTERGCAFVNARTDFQKDFAKYCVAEGLCEVKPPCPVNGMQVHSGETEILRKAVEDYFCFCYGKALGTTVMVPVPYEKMLRDQSAVVVQGLPEGVAFQHPENYDLATLKWILENKAGISFIINRPFLGPESQLGGPGMVTDAERSIVSPSESCGPINVKTEPMEDSGISLKAEAVSVKKESEDPNYYQYNMQGSHPSSTSNEVIEMELPMEDSTPLVPSEEPNEDPEAEVKIEGNTNSSSVTNSAAGVEDLNIVQVTVPDNEKERLSSIEKIKQLREQVNDLFSRKFGEAIGVDFPVKVPYRKITFNPGCVVIDGMPPGVVFKAPGYLEISSMRRILEAAEFIKFTVIRPLPGLELSNVGKRKIDQEGRVFQEKWERAYFFVEVQNIPTCLICKQSMSVSKEYNLRRHYQTNHSKHYDQYMERMRDEKLHELKKGLRKYLLGSSDTECPEQKQVFANPSPTQKSPVQPVEDLAGNLWEKLREKIRSFVAYSIAIDEITDINNTTQLAIFIRGVDENFDVSEELLDTVPMTGTKSGNEIFSRVEKSLKNFCIDWSKLVSVASTGTPAMVDANNGLVTKLKSRVATFCKGAELKSICCIIHPESLCAQKLKMDHVMDVVVKSVNWICSRGLNHSEFTTLLYELDSQYGSLLYYTEIKWLSRGLVLKRFFESLEEIDSFMSSRGKPLPQLSSIDWIRDLAFLVDMTMHLNALNISLQGHSQIVTQMYDLIRAFLAKLCLWETHLTRNNLAHFPTLKLASRNESDGLNYIPKIAELQTEFQKRLSDFKLYESELTLFSSPFSTKIDSVHEELQMEVIDLQCNTVLKTKYDKVGIPEFYKYLWGSYPKYKHHCAKILSMFGSTYICEQLFSIMKLSKTKYCSQLKDSQWDSVLHIAT.

GTF2I-like repeat units lie at residues 98–192 (QVHS…QLGG) and 323–417 (LSSI…SNVG).

The protein belongs to the TFII-I family. As to expression, ubiquitous.

Its subcellular location is the nucleus. This Homo sapiens (Human) protein is General transcription factor II-I repeat domain-containing protein 2A (GTF2IRD2).